We begin with the raw amino-acid sequence, 230 residues long: UPF0702 transmembrane protein YcaP (230 aa).

3 helical membrane-spanning segments follow: residues 16 to 36, 48 to 68, and 75 to 95; these read FDFL…VFLF, MSLF…DVAF, and VPVL…MWLM.

It belongs to the UPF0702 family.

It localises to the cell membrane. This chain is UPF0702 transmembrane protein YcaP (ycaP), found in Escherichia coli (strain K12).